Consider the following 476-residue polypeptide: Siroheme synthase (476 aa).

The precorrin-2 dehydrogenase /sirohydrochlorin ferrochelatase stretch occupies residues 1 to 207 (MTANALFPLF…QRHAEAEAVL (207 aa)). Residues 25–26 (KV) and 46–47 (PS) contribute to the NAD(+) site. S132 is modified (phosphoserine). The uroporphyrinogen-III C-methyltransferase stretch occupies residues 220-476 (GSVTLVGAGA…SAPCPPARIL (257 aa)). The active-site Proton acceptor is the D252. K274 functions as the Proton donor in the catalytic mechanism. S-adenosyl-L-methionine contacts are provided by residues 305–307 (GGD), V310, 335–336 (TA), M387, and G416.

It in the N-terminal section; belongs to the precorrin-2 dehydrogenase / sirohydrochlorin ferrochelatase family. The protein in the C-terminal section; belongs to the precorrin methyltransferase family.

The enzyme catalyses uroporphyrinogen III + 2 S-adenosyl-L-methionine = precorrin-2 + 2 S-adenosyl-L-homocysteine + H(+). It catalyses the reaction precorrin-2 + NAD(+) = sirohydrochlorin + NADH + 2 H(+). The catalysed reaction is siroheme + 2 H(+) = sirohydrochlorin + Fe(2+). The protein operates within cofactor biosynthesis; adenosylcobalamin biosynthesis; precorrin-2 from uroporphyrinogen III: step 1/1. It participates in cofactor biosynthesis; adenosylcobalamin biosynthesis; sirohydrochlorin from precorrin-2: step 1/1. It functions in the pathway porphyrin-containing compound metabolism; siroheme biosynthesis; precorrin-2 from uroporphyrinogen III: step 1/1. Its pathway is porphyrin-containing compound metabolism; siroheme biosynthesis; siroheme from sirohydrochlorin: step 1/1. The protein operates within porphyrin-containing compound metabolism; siroheme biosynthesis; sirohydrochlorin from precorrin-2: step 1/1. In terms of biological role, multifunctional enzyme that catalyzes the SAM-dependent methylations of uroporphyrinogen III at position C-2 and C-7 to form precorrin-2 via precorrin-1. Then it catalyzes the NAD-dependent ring dehydrogenation of precorrin-2 to yield sirohydrochlorin. Finally, it catalyzes the ferrochelation of sirohydrochlorin to yield siroheme. The sequence is that of Siroheme synthase from Xylella fastidiosa (strain M12).